The sequence spans 297 residues: Probable ABC transporter phosphite binding protein PhnD1 (297 aa).

Residues 1 to 24 form the signal peptide; it reads MFNLKYFLVSSSLLFSVFSSPVFS.

It belongs to the phosphate/phosphite/phosphonate binding protein family. The complex may be composed of two ATP-binding proteins (PhnC1), two transmembrane proteins (PhnE1) and a solute-binding protein (PhnD1).

It is found in the periplasm. In terms of biological role, probably part of the ABC transporter complex PhnD1C1E1. Binds strongly to inorganic phosphite and with very weak affinities to methylphosphonate (MPn) and phosphate. The chain is Probable ABC transporter phosphite binding protein PhnD1 from Prochlorococcus marinus (strain MIT 9301).